Reading from the N-terminus, the 924-residue chain is Protein argonaute 4 (924 aa).

Disordered regions lie at residues 1–37 (MDSTNGNGADLESANGANGSGVTEALPPPPPVIPPNV) and 159–185 (TRANGNGSPNGNESPSDGDRKRLRRPN). Positions 26 to 37 (LPPPPPVIPPNV) are enriched in pro residues. Over residues 162 to 173 (NGNGSPNGNESP) the composition is skewed to low complexity. The PAZ domain maps to 292-408 (PVVDFLIANQ…IPLELCALVP (117 aa)). The 309-residue stretch at 577–885 (FILCVLPDKK…AAAQLGTFMK (309 aa)) folds into the Piwi domain. The Nuclear localization signal signature appears at 584–591 (DKKNSDLY).

The protein belongs to the argonaute family. Ago subfamily. Interacts with NRPE1 (via C-terminus). Binding to NRPE1 is required for its function in RdDM. Interacts with turnip crinkle virus (TCV) capsid protein P38; this interaction inhibits probably RNA silencing ability of AGO4. Interacts with SDE3. Binds to RDM3. Binds chromatin at loci subject to transcriptional silencing. Interacts with MBD6. As to expression, expressed in embryos, mature leaves, vascular tissue of the sepals, stamens and stigma, at the tip of the style and siliques.

Its subcellular location is the nucleus. It is found in the nucleolus. The protein localises to the nucleoplasm. It localises to the cajal body. Its function is as follows. Together with RDM3, required for transcriptional gene silencing (TGS) by DNA methylation and repressive histone modifications (H3K9me2) of several chromatin loci. Component of the RISC complex that associate with the small interfering RNA (siRNA) pathway involved in direct cytosine methylation at endogenous DNA repeats. Forms a AGO4/NRPE1/siRNA complex in cajal body, facilitating its function in RNA-directed gene silencing of target loci. Required for CpNpG and asymmetric DNA methylation as well as histone H3 'Lys-9' methylation (H3K9me) at SUP and SN1 loci. May be not required for CpG methylation. Required for the production and maintenance of retrotransposon SN1 and Copia and ribosomal 5S 25 nucleotide siRNAs specialized in gene silencing at chromatin level. Involved in de novo methylation of FWA gene and required for the maintenance of RNA-directed DNA methylation (RdDM) triggered by inverted repeat transgenes. Interacts with miRNA miR390 and miR172, targeting respectively TAS3 and AP2 mRNAs, and mediates cleavage of miRNA targets. Associates mainly with small RNAs of 24 nucleotide in length and preferentially recruits small RNAs with a 5' terminal adenosine. Targeted by the turnip yellows virus (TuYV) protein P0 (via F-box-like domain) for probable proteasome degradation and thereby inactivating AGO4 function in RNA silencing. Required for resistance to the bacterial pathogen P.syringae. Works independently of the RdDM pathway in mediating resistance to P.syringae. RdDM is involved in viral genome methylation as an epigenetic defense against geminiviruses. This Arabidopsis thaliana (Mouse-ear cress) protein is Protein argonaute 4.